The following is a 177-amino-acid chain: Inner membrane-spanning protein YciB (177 aa).

5 helical membrane passes run 22 to 42 (IFIA…IHWI), 50 to 70 (ISLF…FFHN), 76 to 96 (WKIT…QFFT), 121 to 141 (FIWS…AYYF), and 149 to 169 (FKVF…SIYI).

This sequence belongs to the YciB family.

The protein resides in the cell inner membrane. In terms of biological role, plays a role in cell envelope biogenesis, maintenance of cell envelope integrity and membrane homeostasis. The chain is Inner membrane-spanning protein YciB from Buchnera aphidicola subsp. Acyrthosiphon pisum (strain APS) (Acyrthosiphon pisum symbiotic bacterium).